The chain runs to 262 residues: Acyl-[acyl-carrier-protein]--UDP-N-acetylglucosamine O-acyltransferase (262 aa).

This sequence belongs to the transferase hexapeptide repeat family. LpxA subfamily. In terms of assembly, homotrimer.

Its subcellular location is the cytoplasm. It carries out the reaction a (3R)-hydroxyacyl-[ACP] + UDP-N-acetyl-alpha-D-glucosamine = a UDP-3-O-[(3R)-3-hydroxyacyl]-N-acetyl-alpha-D-glucosamine + holo-[ACP]. It functions in the pathway glycolipid biosynthesis; lipid IV(A) biosynthesis; lipid IV(A) from (3R)-3-hydroxytetradecanoyl-[acyl-carrier-protein] and UDP-N-acetyl-alpha-D-glucosamine: step 1/6. In terms of biological role, involved in the biosynthesis of lipid A, a phosphorylated glycolipid that anchors the lipopolysaccharide to the outer membrane of the cell. This Burkholderia multivorans (strain ATCC 17616 / 249) protein is Acyl-[acyl-carrier-protein]--UDP-N-acetylglucosamine O-acyltransferase.